A 1023-amino-acid chain; its full sequence is Hemolysin, chromosomal (1023 aa).

The next 3 helical transmembrane spans lie at 237-259 (IGAGLDTVSGILSAISASFILSN), 267-326 (KAAA…LSIA), and 364-410 (DASL…GILE). Residues Lys-563 and Lys-689 are each lipidated (N6-myristoyl lysine). Hemolysin-type calcium-binding repeat units follow at residues 731 to 748 (FGSKFADIFHGADGDDHI), 749 to 766 (EGNDGNDRLYGDKGNDTL), 767 to 784 (SGGNGDDQLYGGDGNDKL), 785 to 802 (IGGAGNNYLNGGDGDDEL), 815 to 832 (SGGKGNDKLYGSEGADLL), and 833 to 850 (DGGEGNDLLKGGYGNDIY). The segment covering 747–763 (HIEGNDGNDRLYGDKGN) has biased composition (basic and acidic residues). The interval 747–780 (HIEGNDGNDRLYGDKGNDTLSGGNGDDQLYGGDG) is disordered.

It belongs to the RTX prokaryotic toxin (TC 1.C.11) family. Post-translationally, myristoylated by HlyC; the toxin only becomes active when modified. Mainly myristoylated, while a minor fraction is acylated with pentadecanoyl (C15:0; 26%) and heptadecanoyl (C17:0; 6%) fatty acyl groups. Fatty acylation is involved in binding to host membranes and promotes the irreversible insertion of Hemolysin into the host cell membrane. Can be activated by both myristoylation and palmitoylation, but HlyC catalyzes lysine myristoylation.

It is found in the secreted. Its subcellular location is the host cell membrane. Functionally, bacterial hemolysins are exotoxins that attack blood cell membranes and cause cell rupture by forming a pore. The chain is Hemolysin, chromosomal from Escherichia coli.